We begin with the raw amino-acid sequence, 748 residues long: SNF-related serine/threonine-protein kinase (748 aa).

The region spanning 16-269 (YDLDKTLGRG…LEEIESHPWL (254 aa)) is the Protein kinase domain. Residues 22–30 (LGRGHFAVV) and Lys45 each bind ATP. Asp139 serves as the catalytic Proton acceptor. At Ser162 the chain carries Phosphoserine. Residue Thr173 is modified to Phosphothreonine; by LKB1. Positions 291–334 (SEEEHNSIIQRMVLGDIADRDAIVEALETNRYNHITATYFLLAE) constitute a UBA domain. Phosphoserine is present on residues Ser362, Ser390, Ser482, Ser495, and Ser518. Positions 383-415 (SHATVPQSPARAGDNVLNGHRSKGLCDPAKKDE) are disordered. The span at 491–503 (EEGESDDEFDMDE) shows a compositional bias: acidic residues. The interval 491-640 (EEGESDDEFD…SPSPASASAA (150 aa)) is disordered. Residues 522 to 532 (VHKRYHRRKSQ) show a composition bias toward basic residues. Over residues 533–542 (GRGSSCSSSE) the composition is skewed to low complexity. Arg534 carries the omega-N-methylarginine modification. Basic and acidic residues predominate over residues 549–558 (ESRRRLDKDS). 2 stretches are compositionally biased toward gly residues: residues 575–592 (GSEGDGGGQSKPSSGGGV) and 600–614 (QGTGGGSQGGSGGTP). Residue Ser606 is modified to Phosphoserine. Positions 629–640 (SSSPSPASASAA) are enriched in low complexity.

This sequence belongs to the protein kinase superfamily. CAMK Ser/Thr protein kinase family. It depends on Mg(2+) as a cofactor. Autophosphorylated. Phosphorylation on Thr-173 by STK11/LKB1 in complex with STE20-related adapter-alpha (STRADA) pseudo kinase and CAB39. In terms of tissue distribution, ubiquitously expressed in all tissues examined.

Its subcellular location is the nucleus. It catalyses the reaction L-seryl-[protein] + ATP = O-phospho-L-seryl-[protein] + ADP + H(+). The enzyme catalyses L-threonyl-[protein] + ATP = O-phospho-L-threonyl-[protein] + ADP + H(+). With respect to regulation, activated by phosphorylation on Thr-173. In terms of biological role, may play a role in hematopoietic cell proliferation or differentiation. Potential mediator of neuronal apoptosis. In Mus musculus (Mouse), this protein is SNF-related serine/threonine-protein kinase.